Consider the following 238-residue polypeptide: tRNA (guanine-N(7)-)-methyltransferase (238 aa).

The S-adenosyl-L-methionine site is built by Glu-68, Glu-93, Asp-120, and Asp-143. Asp-143 is a catalytic residue. Residues Lys-147, Asp-179, and 216 to 219 (TKFE) contribute to the substrate site.

This sequence belongs to the class I-like SAM-binding methyltransferase superfamily. TrmB family.

The enzyme catalyses guanosine(46) in tRNA + S-adenosyl-L-methionine = N(7)-methylguanosine(46) in tRNA + S-adenosyl-L-homocysteine. It functions in the pathway tRNA modification; N(7)-methylguanine-tRNA biosynthesis. Catalyzes the formation of N(7)-methylguanine at position 46 (m7G46) in tRNA. The chain is tRNA (guanine-N(7)-)-methyltransferase from Shewanella baltica (strain OS195).